A 1024-amino-acid chain; its full sequence is PH and SEC7 domain-containing protein 1 (1024 aa).

Residues 67–96 (CTPLRAPPSPHIAPSPWGPSSPTGQPPPGA) form a disordered region. Positions 71 to 95 (RAPPSPHIAPSPWGPSSPTGQPPPG) are enriched in pro residues. 2 positions are modified to phosphoserine: Ser-126 and Ser-156. 4 disordered regions span residues 154–195 (STSD…LPNG), 250–277 (PSSGAKPPEQVLPSRGVGSKQGSGVAVG), 307–401 (REEA…GPDS), and 434–536 (PTQS…LDST). Residues 348–365 (NEDDEAGGEEDVDDEVFE) show a composition bias toward acidic residues. A compositionally biased stretch (pro residues) spans 445–463 (PPQPPAPRPDPPAPAPLAP). Basic and acidic residues predominate over residues 495 to 507 (PRKELPSPSHSED). Residues 512–706 (GAAPLGSEPP…KALYSSIKNE (195 aa)) enclose the SEC7 domain. Ser-720 is subject to Phosphoserine. In terms of domain architecture, PH spans 756-869 (AVYKHGALVR…WITRINVVAA (114 aa)). 2 coiled-coil regions span residues 898-924 (LSQEEQVRTHEAKLKAMASELREHRAA) and 956-983 (AALLRVKMKAASEELDTIEAALAQAGST). The tract at residues 976-1024 (ALAQAGSTEDGCPPPHSSPSLRPKPTSQPRAQRPGSETRAGAGSTRPKP) is disordered.

Belongs to the PSD family. In terms of assembly, interacts with ACTN1. Interacts (ARF6-bound form) with KCNK1; does not interact with KCNK1 in the absence of ARF6. In terms of tissue distribution, highest expression detected in brain and some expression detected also in uterus, stomach, ovary and intestine, with isoform 2 being expressed at the highest levels. In the brain, isoform 1 is highly expressed in the strata oriens, radiatum, lacunosum-moleculare of the hippocampal CA1-3 regions and the dentate molecular layer of the hippocampal formation, with lower levels detected in the neuronal cell layers and the stratum lucidum (at protein level). Not detected in tongue, thymus, spleen, lung, heart, liver and kidney.

It localises to the cell membrane. The protein resides in the cell projection. The protein localises to the ruffle. Its subcellular location is the ruffle membrane. It is found in the cleavage furrow. In terms of biological role, guanine nucleotide exchange factor for ARF6. Isoform 2 and isoform 3 induce cytoskeletal remodeling, but lead to distinct morphological changes in HeLa cells: isoform 2 induces cell elongation and formation of actin-rich protrusions, whereas isoform 3 promotes the formation of membrane ruffles and loss of stress fibers. This is PH and SEC7 domain-containing protein 1 (Psd) from Mus musculus (Mouse).